A 297-amino-acid polypeptide reads, in one-letter code: Polyketide transferase ATR5 (297 aa).

The segment at Asp49–Met272 is abhydrolase domain.

Belongs to the polyketide transferase af380 family.

Its pathway is mycotoxin biosynthesis. Polyketide transferase; part of the core atranone cluster (CAC) which products are predicted to catalyze most or all steps of atranone synthesis, starting from geranylgeranyl pyrophosphate (GGPP). The initial cyclization of GGPP to dolabellane is probably performed by the terpene cyclase ATR13. The Baeyer-Villiger oxidation near the end of the atranone synthesis, which converts atranones D and E to atranones F and G is predicted to be catalyzed by the monooxygenase ATR8. Of the CAC's other predicted gene products, the reducing PKS ATR6 might synthesize a polyketide chain. This polyketide is probably transferred onto the atranone backbone by the polyketide transferase ATR5. Other predicted CAC products include 4 oxygenases (ATR2, ATR3, ATR4, and ATR14), 3 short-chain reductases (ATR7, ATR9, and ATR10), and a methyltransferase (ATR12). These may all be involved in the various steps of atranone biosynthesis, although their specific roles must await experimental determination. This is Polyketide transferase ATR5 from Stachybotrys chlorohalonatus (strain IBT 40285).